A 353-amino-acid polypeptide reads, in one-letter code: DNA integrity scanning protein DisA (353 aa).

The DAC domain maps to 6 to 144; it reads DKELMNILKI…GGIKYVLRDS (139 aa). ATP-binding positions include glycine 73, leucine 91, and 104-108; that span reads TRHRT.

Belongs to the DisA family. In terms of assembly, homooctamer. Mg(2+) serves as cofactor.

The enzyme catalyses 2 ATP = 3',3'-c-di-AMP + 2 diphosphate. Its function is as follows. Participates in a DNA-damage check-point that is active prior to asymmetric division when DNA is damaged. DisA forms globular foci that rapidly scan along the chromosomes during sporulation, searching for lesions. When a lesion is present, DisA pauses at the lesion site. This triggers a cellular response that culminates in a temporary block in sporulation initiation. Also has diadenylate cyclase activity, catalyzing the condensation of 2 ATP molecules into cyclic di-AMP (c-di-AMP). c-di-AMP acts as a signaling molecule that couples DNA integrity with progression of sporulation. The rise in c-di-AMP level generated by DisA while scanning the chromosome, operates as a positive signal that advances sporulation; upon encountering a lesion, the DisA focus arrests at the damaged site and halts c-di-AMP synthesis. The protein is DNA integrity scanning protein DisA of Clostridium botulinum (strain 657 / Type Ba4).